The sequence spans 303 residues: Movement protein (303 aa).

A compositionally biased stretch (polar residues) spans 1–18 (MSNIVSPFSGSSRTTSDV). Disordered regions lie at residues 1 to 24 (MSNIVSPFSGSSRTTSDVGKQAGG) and 267 to 303 (EESESPSALGRGVKDSKSVSASSVAGLPVSSPTLRIK).

This sequence belongs to the bromovirus movement protein family. Post-translationally, phosphorylated by host.

The protein localises to the host cell junction. It localises to the host plasmodesma. In terms of biological role, transports viral genome to neighboring plant cells directly through plasmosdesmata, without any budding. The movement protein allows efficient cell to cell propagation, by bypassing the host cell wall barrier. Acts by forming a tubular structure at the host plasmodesmata, enlarging it enough to allow free passage of virion capsids. The protein is Movement protein of Brome mosaic virus (BMV).